The primary structure comprises 788 residues: Protein translocase subunit SecA 2 (788 aa).

Residues glutamine 86, 104–108 (GEGKT), and aspartate 493 each bind ATP.

It belongs to the SecA family. Monomer and homodimer. Part of the essential Sec protein translocation apparatus which comprises SecA, SecYEG and auxiliary proteins SecDF. Other proteins may also be involved.

It localises to the cell membrane. Its subcellular location is the cytoplasm. It carries out the reaction ATP + H2O + cellular proteinSide 1 = ADP + phosphate + cellular proteinSide 2.. Functionally, part of the Sec protein translocase complex. Interacts with the SecYEG preprotein conducting channel. Has a central role in coupling the hydrolysis of ATP to the transfer of proteins into and across the cell membrane, serving as an ATP-driven molecular motor driving the stepwise translocation of polypeptide chains across the membrane. In Bacillus cereus (strain ZK / E33L), this protein is Protein translocase subunit SecA 2.